The chain runs to 655 residues: Polycyclic ketone monooxygenase (655 aa).

FAD contacts are provided by Gly-89, Asp-113, Ala-114, Thr-121, Trp-124, Cys-132, Asp-133, Tyr-139, and Val-183. The NADPH site is built by Thr-277, Thr-280, Thr-301, Lys-425, and Val-452. A disulfide bridge connects residues Cys-424 and Cys-596. Residues Thr-492 and Asn-541 each contribute to the FAD site. Tyr-600 contacts NADPH.

This sequence belongs to the FAD-binding monooxygenase family. FAD serves as cofactor.

Its function is as follows. Polycyclic ketone monooxygenase (PockeMO) that displays excellent enantioselectivity, acts on various ketones, and is particularly active on polycyclic molecules. Breaks C-C bonds through the insertion of a single oxygen atom adjacent to a carbonyl moiety, yielding esters or lactones from ketones. PockeMO is able to convert linear ketones (including cyclohexane and to a lesser extend 4-octanone), cyclic ketones (including cyclohexanone and cyclooctanone), bicyclic ketones and polycyclic ketones (steroids). Performs oxidation of the keto functionalities at both the A and D rings of steroids. Particularly, oxidizes the A ring of stanolone or pregnenolone. Selectively oxidizes the D ring of androstenedione or androstadienedione, steroids with keto groups in both the A and D rings, to yield the pharmaceutically relevant testo(lo)lactone. In Thermothelomyces thermophilus (strain ATCC 42464 / BCRC 31852 / DSM 1799) (Sporotrichum thermophile), this protein is Polycyclic ketone monooxygenase.